The following is a 213-amino-acid chain: Redox-sensing transcriptional repressor Rex (213 aa).

Residues 17–56 constitute a DNA-binding region (H-T-H motif); that stretch reads LYYRIFKRFHSENIEKASSKQIAEAIGIDSATVRRDFSYF. 91 to 96 provides a ligand contact to NAD(+); the sequence is GVGNIG.

This sequence belongs to the transcriptional regulatory Rex family. Homodimer.

The protein resides in the cytoplasm. In terms of biological role, modulates transcription in response to changes in cellular NADH/NAD(+) redox state. This is Redox-sensing transcriptional repressor Rex from Streptococcus mutans serotype c (strain ATCC 700610 / UA159).